Reading from the N-terminus, the 448-residue chain is Gluconate permease (448 aa).

A run of 12 helical transmembrane segments spans residues 2–22 (PLII…GLKL), 23–43 (NTFI…GMPF), 52–72 (AGIG…AMLG), 106–126 (FIIG…PIVF), 134–154 (ISIL…HGFL), 174–194 (VLLY…PLFT), 228–248 (FGIS…ATII), 269–289 (IGNA…TMGI), 302–322 (CSTA…GGAF), 347–367 (IILA…ATVA), 373–393 (GLVI…VLAT), and 428–448 (LLET…SLVV).

The protein belongs to the GntP permease family.

The protein localises to the cell membrane. Its pathway is carbohydrate acid metabolism; D-gluconate degradation. The protein is Gluconate permease (gntP) of Bacillus subtilis (strain 168).